A 542-amino-acid polypeptide reads, in one-letter code: Probable serine/threonine-protein kinase ndrB (542 aa).

The interval 1–52 is disordered; the sequence is MNVERKLESLSLQQQQQEEQQDESEQPNQGVEDEEEEEYDEEEYEEEEEDIN. Over residues 9–18 the composition is skewed to low complexity; sequence SLSLQQQQQE. The span at 19-51 shows a compositional bias: acidic residues; the sequence is EQQDESEQPNQGVEDEEEEEYDEEEYEEEEEDI. One can recognise a Protein kinase domain in the interval 130-437; that stretch reads FESIRIIGRG…VEEIQSHPFF (308 aa). ATP contacts are provided by residues 136–144 and K159; that span reads IGRGAFGEV. D258 (proton acceptor) is an active-site residue. Positions 438-510 constitute an AGC-kinase C-terminal domain; that stretch reads KGVDWRRLRE…RNFDAMRDAF (73 aa). Residues 452–486 form a disordered region; sequence IIPQLSSPTDTSNFDHYEEEQQPEPMQPVQSKSRR. A compositionally biased stretch (polar residues) spans 455–465; it reads QLSSPTDTSNF.

It belongs to the protein kinase superfamily. AGC Ser/Thr protein kinase family.

It localises to the cytoplasm. The enzyme catalyses L-seryl-[protein] + ATP = O-phospho-L-seryl-[protein] + ADP + H(+). The catalysed reaction is L-threonyl-[protein] + ATP = O-phospho-L-threonyl-[protein] + ADP + H(+). The sequence is that of Probable serine/threonine-protein kinase ndrB (ndrB) from Dictyostelium discoideum (Social amoeba).